Consider the following 569-residue polypeptide: Probable ABC transporter permease protein y4fN (569 aa).

13 consecutive transmembrane segments (helical) span residues 10–30 (VFYWLGLIVIAWAVLTFLLVP), 68–88 (VWMTAATTLTVTIVGMFQVAV), 98–118 (GFLKIAFSTPLVFGGVVAAAG), 121–141 (FTYGPSGAITAALAALFPSLP), 145–165 (FIGWFGVLFAHTFLMTSFHFL), 196–216 (VVLPVILPTVLAVTLLTLITA), 247–267 (PDMAALLALLMGLVLMGLILL), 304–324 (LAYLLAAIYLMPVALIVLFSF), 363–383 (MSSIAVAVGLAITLFAVPIMV), 395–415 (ICFVLPWIIPTMLLAVGLIVA), 426–446 (LVLLGSYWLLPIGYVIFSLPL), 480–500 (VVLPLVAPTAILVAGMKFNNL), and 534–554 (AAVSLVYVTLIMAFSLAVILI). The ABC transmembrane type-1 1 domain occupies 64–268 (LWNTVWMTAA…LVLMGLILLS (205 aa)). An ABC transmembrane type-1 2 domain is found at 357-551 (FFNSMLMSSI…TLIMAFSLAV (195 aa)).

This sequence belongs to the binding-protein-dependent transport system permease family. CysTW subfamily.

The protein resides in the cell inner membrane. In terms of biological role, probably part of the binding-protein-dependent transport system y4fNOP. Probably responsible for the translocation of the substrate across the membrane. The protein is Probable ABC transporter permease protein y4fN of Sinorhizobium fredii (strain NBRC 101917 / NGR234).